The following is a 435-amino-acid chain: Tol-Pal system protein TolB (435 aa).

Positions Met-1–Ala-20 are cleaved as a signal peptide.

Belongs to the TolB family. The Tol-Pal system is composed of five core proteins: the inner membrane proteins TolA, TolQ and TolR, the periplasmic protein TolB and the outer membrane protein Pal. They form a network linking the inner and outer membranes and the peptidoglycan layer.

It localises to the periplasm. Its function is as follows. Part of the Tol-Pal system, which plays a role in outer membrane invagination during cell division and is important for maintaining outer membrane integrity. This is Tol-Pal system protein TolB from Francisella tularensis subsp. tularensis (strain WY96-3418).